Consider the following 37-residue polypeptide: Large ribosomal subunit protein bL36 (37 aa).

It belongs to the bacterial ribosomal protein bL36 family.

This is Large ribosomal subunit protein bL36 from Geobacter sp. (strain M21).